The chain runs to 156 residues: Eosinophil cationic protein 2 (156 aa).

The signal sequence occupies residues 1–25 (MGPKLLESRLCLLLLLGLVLMLASC). Residue His38 is the Proton acceptor of the active site. Intrachain disulfides connect Cys47/Cys106, Cys61/Cys119, Cys79/Cys134, and Cys86/Cys94. Residue 62 to 66 (KGLNT) participates in substrate binding. Residues Asn89, Asn96, and Asn107 are each glycosylated (N-linked (GlcNAc...) asparagine). The active-site Proton donor is His151.

Belongs to the pancreatic ribonuclease family.

The protein resides in the cytoplasmic granule. Its function is as follows. Cytotoxin and helminthotoxin with ribonuclease activity. Selectively chemotactic for dendritic cells. Possesses a wide variety of biological activities. The sequence is that of Eosinophil cationic protein 2 (Ear2) from Mus musculus (Mouse).